Here is a 364-residue protein sequence, read N- to C-terminus: Dual-specificity RNA methyltransferase RlmN (364 aa).

Glu91 functions as the Proton acceptor in the catalytic mechanism. A Radical SAM core domain is found at 97–333 (ESDRGTLCIS…VTVRKTRGDD (237 aa)). Cys104 and Cys338 are joined by a disulfide. [4Fe-4S] cluster-binding residues include Cys111, Cys115, and Cys118. S-adenosyl-L-methionine is bound by residues 164–165 (GE), Ser196, 218–220 (SLH), and Asn295. Residue Cys338 is the S-methylcysteine intermediate of the active site.

The protein belongs to the radical SAM superfamily. RlmN family. [4Fe-4S] cluster serves as cofactor.

It localises to the cytoplasm. The enzyme catalyses adenosine(2503) in 23S rRNA + 2 reduced [2Fe-2S]-[ferredoxin] + 2 S-adenosyl-L-methionine = 2-methyladenosine(2503) in 23S rRNA + 5'-deoxyadenosine + L-methionine + 2 oxidized [2Fe-2S]-[ferredoxin] + S-adenosyl-L-homocysteine. The catalysed reaction is adenosine(37) in tRNA + 2 reduced [2Fe-2S]-[ferredoxin] + 2 S-adenosyl-L-methionine = 2-methyladenosine(37) in tRNA + 5'-deoxyadenosine + L-methionine + 2 oxidized [2Fe-2S]-[ferredoxin] + S-adenosyl-L-homocysteine. Its function is as follows. Specifically methylates position 2 of adenine 2503 in 23S rRNA and position 2 of adenine 37 in tRNAs. m2A2503 modification seems to play a crucial role in the proofreading step occurring at the peptidyl transferase center and thus would serve to optimize ribosomal fidelity. The polypeptide is Dual-specificity RNA methyltransferase RlmN (Neisseria meningitidis serogroup C / serotype 2a (strain ATCC 700532 / DSM 15464 / FAM18)).